Reading from the N-terminus, the 542-residue chain is Cytochrome P450 monooxygenase TRI1 (542 aa).

A helical transmembrane segment spans residues 37 to 54 (LIYFLCFVVLGRAVQWFL). 3 N-linked (GlcNAc...) asparagine glycosylation sites follow: asparagine 167, asparagine 297, and asparagine 428. Cysteine 469 provides a ligand contact to heme.

Belongs to the cytochrome P450 family. It depends on heme as a cofactor.

Its subcellular location is the membrane. It participates in sesquiterpene biosynthesis; trichothecene biosynthesis. Cytochrome P450 monooxygenase; part of 2-gene cluster involved in trichothecene C-8 modification that mediates the biosynthesis of T2-toxin. The biosynthesis of trichothecenes begins with the cyclization of farnesyl diphosphate to trichodiene and is catalyzed by the trichodiene synthase TRI5. Trichodiene undergoes a series of oxygenations catalyzed by the cytochrome P450 monooxygenase TRI4. TRI4 controls the addition of four oxygens at C-2, C-3, C-11, and the C-12, C-13-epoxide to form the intermediate isotrichotriol. Isotrichotriol then undergoes a non-enzymatic isomerization and cyclization to form isotrichodermol. During this process, the oxygen at the C-2 position becomes the pyran ring oxygen and the hydroxyl group at C-11 is lost. More complex type A trichothecenes are built by modifying isotrichodermol through a series of paired hydroxylation and acetylation or acylation steps. Isotrichodermol is converted to isotrichodermin by the acetyltransferase TRI101. TRI101 encodes a C-3 transacetylase that acts as a self-protection or resistance factor during biosynthesis and that the presence of a free C-3 hydroxyl group is a key component of Fusarium trichothecene phytotoxicity. A second hydroxyl group is added to C-15 by the trichothecene C-15 hydroxylase TRI11, producing 15-decalonectrin, which is then acetylated by TRI3, producing calonectrin. A third hydroxyl group is added at C-4 by the cytochrome P450 monooxygenase TRI13, converting calonectrin to 3,15-diacetoxyspirpenol, which is subsequently acetylated by the acetyltransferase TRI7. A fourth hydroxyl group is added to C-8 by the cytochrome P450 monooxygenase TRI1, followed by the addition of an isovaleryl moiety by TRI16. Finally, the acetyl group is removed from the C-3 position by the trichothecene C-3 esterase TRI8 to produce T-2 toxin. The polypeptide is Cytochrome P450 monooxygenase TRI1 (Fusarium sporotrichioides).